We begin with the raw amino-acid sequence, 547 residues long: Chaperonin GroEL (547 aa).

ATP-binding positions include 30–33, lysine 51, 87–91, glycine 415, and aspartate 496; these read TLGP and DGTTT. Residues 527 to 547 form a disordered region; sequence ENTPDMPAMPPGGMGGMGGMY. Residues 538-547 show a composition bias toward gly residues; that stretch reads GGMGGMGGMY.

This sequence belongs to the chaperonin (HSP60) family. As to quaternary structure, forms a cylinder of 14 subunits composed of two heptameric rings stacked back-to-back. Interacts with the co-chaperonin GroES.

It localises to the cytoplasm. It carries out the reaction ATP + H2O + a folded polypeptide = ADP + phosphate + an unfolded polypeptide.. In terms of biological role, together with its co-chaperonin GroES, plays an essential role in assisting protein folding. The GroEL-GroES system forms a nano-cage that allows encapsulation of the non-native substrate proteins and provides a physical environment optimized to promote and accelerate protein folding. This is Chaperonin GroEL from Chlorobium phaeovibrioides (strain DSM 265 / 1930) (Prosthecochloris vibrioformis (strain DSM 265)).